The sequence spans 251 residues: tRNA-uridine aminocarboxypropyltransferase 2 (251 aa).

4 residues coordinate Zn(2+): C23, C26, C33, and C35. The short motif at 131-134 is the DXTW element; sequence DGTW.

The protein belongs to the TDD superfamily. DTWD2 family.

The catalysed reaction is a uridine in tRNA + S-adenosyl-L-methionine = a 3-[(3S)-3-amino-3-carboxypropyl]uridine in tRNA + S-methyl-5'-thioadenosine + H(+). Catalyzes the formation of 3-(3-amino-3-carboxypropyl)uridine (acp3U) at position 20a in the D-loop of several cytoplasmic tRNAs (acp3U(20a)). The polypeptide is tRNA-uridine aminocarboxypropyltransferase 2 (Drosophila melanogaster (Fruit fly)).